The following is a 298-amino-acid chain: GPN-loop GTPase QQT1 (298 aa).

12–17 (GSGKTT) provides a ligand contact to GTP. The Gly-Pro-Asn (GPN)-loop; involved in dimer interface signature appears at 69–71 (GPN). 173–176 (SKID) is a GTP binding site.

Belongs to the GPN-loop GTPase family. Heterodimer with QQT2. As to expression, expressed in vascular tissues, root tips, apical and root meristematic regions, and floral primordia.

Its subcellular location is the cytoplasm. The protein localises to the nucleus. The protein resides in the cytoskeleton. It localises to the spindle. It is found in the phragmoplast. Functionally, small GTPase that is essential for the correct formation of the tangential divisions in early embryos. Associates with microtubule during mitosis and may function in the positioning of the division plane. May participate in the patterning of the early embryo at the octant-dermatogen transition. Is crucial for normal development of the plant. In Arabidopsis thaliana (Mouse-ear cress), this protein is GPN-loop GTPase QQT1.